Reading from the N-terminus, the 207-residue chain is Thiamine-phosphate synthase (207 aa).

4-amino-2-methyl-5-(diphosphooxymethyl)pyrimidine is bound by residues 38–42 and Asn70; that span reads QYRAK. 2 residues coordinate Mg(2+): Asp71 and Asp90. Position 109 (Thr109) interacts with 4-amino-2-methyl-5-(diphosphooxymethyl)pyrimidine. 2-[(2R,5Z)-2-carboxy-4-methylthiazol-5(2H)-ylidene]ethyl phosphate is bound at residue 135–137; sequence TNS. Lys138 provides a ligand contact to 4-amino-2-methyl-5-(diphosphooxymethyl)pyrimidine. 2-[(2R,5Z)-2-carboxy-4-methylthiazol-5(2H)-ylidene]ethyl phosphate is bound by residues Gly165 and 185–186; that span reads IS.

It belongs to the thiamine-phosphate synthase family. The cofactor is Mg(2+).

It catalyses the reaction 2-[(2R,5Z)-2-carboxy-4-methylthiazol-5(2H)-ylidene]ethyl phosphate + 4-amino-2-methyl-5-(diphosphooxymethyl)pyrimidine + 2 H(+) = thiamine phosphate + CO2 + diphosphate. The enzyme catalyses 2-(2-carboxy-4-methylthiazol-5-yl)ethyl phosphate + 4-amino-2-methyl-5-(diphosphooxymethyl)pyrimidine + 2 H(+) = thiamine phosphate + CO2 + diphosphate. It carries out the reaction 4-methyl-5-(2-phosphooxyethyl)-thiazole + 4-amino-2-methyl-5-(diphosphooxymethyl)pyrimidine + H(+) = thiamine phosphate + diphosphate. The protein operates within cofactor biosynthesis; thiamine diphosphate biosynthesis; thiamine phosphate from 4-amino-2-methyl-5-diphosphomethylpyrimidine and 4-methyl-5-(2-phosphoethyl)-thiazole: step 1/1. Condenses 4-methyl-5-(beta-hydroxyethyl)thiazole monophosphate (THZ-P) and 2-methyl-4-amino-5-hydroxymethyl pyrimidine pyrophosphate (HMP-PP) to form thiamine monophosphate (TMP). In Clostridium perfringens (strain 13 / Type A), this protein is Thiamine-phosphate synthase.